The following is a 329-amino-acid chain: DNA-directed RNA polymerase subunit alpha (329 aa).

Residues 1–235 (MQGSVIEFLK…EQLDAFVDLR (235 aa)) are alpha N-terminal domain (alpha-NTD). The tract at residues 249 to 329 (FDPILLRPVD…NWPPASIAED (81 aa)) is alpha C-terminal domain (alpha-CTD).

The protein belongs to the RNA polymerase alpha chain family. In terms of assembly, homodimer. The RNAP catalytic core consists of 2 alpha, 1 beta, 1 beta' and 1 omega subunit. When a sigma factor is associated with the core the holoenzyme is formed, which can initiate transcription.

The enzyme catalyses RNA(n) + a ribonucleoside 5'-triphosphate = RNA(n+1) + diphosphate. Its function is as follows. DNA-dependent RNA polymerase catalyzes the transcription of DNA into RNA using the four ribonucleoside triphosphates as substrates. This Haemophilus ducreyi (strain 35000HP / ATCC 700724) protein is DNA-directed RNA polymerase subunit alpha.